Here is an 859-residue protein sequence, read N- to C-terminus: Homeobox-leucine zipper protein HOX32 (859 aa).

The interval 7–31 is disordered; sequence AAVHGVGRQDRSSPGGGGAPQVDTG. Positions 29–92 form a DNA-binding region, homeobox; sequence DTGKYVRYTP…NRRCREKQRK (64 aa). The stretch at 100-129 forms a coiled coil; the sequence is VNRKLTAMNKLLMEENDRLQKQVSRLVYEN. A compositionally biased stretch (polar residues) spans 146 to 164; that stretch reads TSCESVVTSGQHHQQQNPA. The disordered stretch occupies residues 146 to 172; that stretch reads TSCESVVTSGQHHQQQNPAATRPQRDA. The 223-residue stretch at 171–393 folds into the START domain; the sequence is DANNPAGLLA…LRHIRQIAHE (223 aa).

The protein belongs to the HD-ZIP homeobox family. Class III subfamily. In terms of tissue distribution, expressed in seedlings, roots, stems, leaf sheaths and blades and panicles.

It is found in the nucleus. Its function is as follows. Probable transcription factor. This Oryza sativa subsp. indica (Rice) protein is Homeobox-leucine zipper protein HOX32 (HOX32).